The following is a 91-amino-acid chain: Small ribosomal subunit protein bS20 (91 aa).

The interval 1-28 (MANTASAEKRNRQAQKRRARNVQVRTGV) is disordered.

The protein belongs to the bacterial ribosomal protein bS20 family.

Its function is as follows. Binds directly to 16S ribosomal RNA. The polypeptide is Small ribosomal subunit protein bS20 (Anaeromyxobacter dehalogenans (strain 2CP-1 / ATCC BAA-258)).